Here is a 375-residue protein sequence, read N- to C-terminus: Succinyl-diaminopimelate desuccinylase (375 aa).

H66 is a Zn(2+) binding site. D68 is an active-site residue. D99 contributes to the Zn(2+) binding site. E133 acts as the Proton acceptor in catalysis. E134, E162, and H348 together coordinate Zn(2+).

This sequence belongs to the peptidase M20A family. DapE subfamily. In terms of assembly, homodimer. The cofactor is Zn(2+). Co(2+) serves as cofactor.

It catalyses the reaction N-succinyl-(2S,6S)-2,6-diaminopimelate + H2O = (2S,6S)-2,6-diaminopimelate + succinate. The protein operates within amino-acid biosynthesis; L-lysine biosynthesis via DAP pathway; LL-2,6-diaminopimelate from (S)-tetrahydrodipicolinate (succinylase route): step 3/3. In terms of biological role, catalyzes the hydrolysis of N-succinyl-L,L-diaminopimelic acid (SDAP), forming succinate and LL-2,6-diaminopimelate (DAP), an intermediate involved in the bacterial biosynthesis of lysine and meso-diaminopimelic acid, an essential component of bacterial cell walls. The polypeptide is Succinyl-diaminopimelate desuccinylase (Shigella sonnei (strain Ss046)).